A 508-amino-acid polypeptide reads, in one-letter code: Photosystem II CP47 reaction center protein (508 aa).

Transmembrane regions (helical) follow at residues 21–36 (SVHIMHTALVSGWAGS), 101–115 (IVFSGLCFLAAIWHW), 140–156 (GIHLFLSGVACFGFGAF), 203–218 (IAAGTLGILAGLFHLS), 237–252 (VLSSSIAAVFFAAFVV), and 457–472 (TFALLFFFGHIWHGAR).

Belongs to the PsbB/PsbC family. PsbB subfamily. As to quaternary structure, PSII is composed of 1 copy each of membrane proteins PsbA, PsbB, PsbC, PsbD, PsbE, PsbF, PsbH, PsbI, PsbJ, PsbK, PsbL, PsbM, PsbT, PsbX, PsbY, PsbZ, Psb30/Ycf12, at least 3 peripheral proteins of the oxygen-evolving complex and a large number of cofactors. It forms dimeric complexes. The cofactor is Binds multiple chlorophylls. PSII binds additional chlorophylls, carotenoids and specific lipids..

It localises to the plastid. The protein resides in the chloroplast thylakoid membrane. Its function is as follows. One of the components of the core complex of photosystem II (PSII). It binds chlorophyll and helps catalyze the primary light-induced photochemical processes of PSII. PSII is a light-driven water:plastoquinone oxidoreductase, using light energy to abstract electrons from H(2)O, generating O(2) and a proton gradient subsequently used for ATP formation. The sequence is that of Photosystem II CP47 reaction center protein from Calycanthus floridus var. glaucus (Eastern sweetshrub).